The following is a 331-amino-acid chain: Pantothenate kinase (331 aa).

109-116 (GSVAVGKS) lines the ATP pocket.

It belongs to the prokaryotic pantothenate kinase family.

Its subcellular location is the cytoplasm. The enzyme catalyses (R)-pantothenate + ATP = (R)-4'-phosphopantothenate + ADP + H(+). It functions in the pathway cofactor biosynthesis; coenzyme A biosynthesis; CoA from (R)-pantothenate: step 1/5. This chain is Pantothenate kinase, found in Rhizobium rhizogenes (strain K84 / ATCC BAA-868) (Agrobacterium radiobacter).